The sequence spans 207 residues: Outer-membrane lipoprotein LolB (207 aa).

Positions 1 to 21 are cleaved as a signal peptide; the sequence is MPLPDFRLIRLLPLAALVLTA. Cys22 carries N-palmitoyl cysteine lipidation. Residue Cys22 is the site of S-diacylglycerol cysteine attachment.

This sequence belongs to the LolB family. In terms of assembly, monomer.

Its subcellular location is the cell outer membrane. Plays a critical role in the incorporation of lipoproteins in the outer membrane after they are released by the LolA protein. This chain is Outer-membrane lipoprotein LolB, found in Escherichia coli O7:K1 (strain IAI39 / ExPEC).